The chain runs to 633 residues: Extracellular metalloproteinase 3 (633 aa).

The signal sequence occupies residues 1–18; that stretch reads MHGLLLAGLLALPMNVLA. The propeptide occupies 19–246; it reads HPAEQHASNV…VHNVVDYVAS (228 aa). Asn-410 is a glycosylation site (N-linked (GlcNAc...) asparagine). His-429 contributes to the Zn(2+) binding site. The active site involves Glu-430. His-433 provides a ligand contact to Zn(2+). Asn-480 and Asn-622 each carry an N-linked (GlcNAc...) asparagine glycan.

It belongs to the peptidase M36 family. Zn(2+) is required as a cofactor.

The protein localises to the secreted. Its function is as follows. Secreted metalloproteinase probably acting as a virulence factor. This chain is Extracellular metalloproteinase 3 (MEP3), found in Trichophyton tonsurans (Scalp ringworm fungus).